The chain runs to 251 residues: Probable transcriptional regulatory protein Franean1_5147 (251 aa).

This sequence belongs to the TACO1 family.

Its subcellular location is the cytoplasm. In Parafrankia sp. (strain EAN1pec), this protein is Probable transcriptional regulatory protein Franean1_5147.